The following is a 399-amino-acid chain: MAKNRHLFTSESVSDGHPDKIADQISDAILDAIISKDPDARVACETTVTTGLVLVAGEITTSVYVDIPKIVRDTIKEIGYTRAKYGFDAETCAVLTAIDEQSPDIAQGVDEALESRSGSEIDAAIEAIGAGDQGLMFGFATDETEELMPLPIFLAHGLARKLTELRKTKKLDYLRPDAKTQVTVEYDELNQPVRIDTIVVSTQHHPDITQEEIAKDLHTYLFPEVIDPSFLDEDTKYFINPTGRFVIGGPLGDAGLTGRKIIVDTYGGYARHGGGAFSGKDPTKVDRSGAYAARYVAKNIVAAGLAKKVEVQLAYAIGVARPVSISIDTYGTSDYSEQELIDGVNALFDLRPAGIIHMLDLRRPIYRQTAAFGHFGRSDLDLPWERTDKAEALKKLIVK.

ATP is bound at residue His-17. Asp-19 lines the Mg(2+) pocket. Glu-45 serves as a coordination point for K(+). L-methionine-binding residues include Glu-58 and Gln-101. Residues 101–111 are flexible loop; it reads QSPDIAQGVDE. ATP is bound by residues 177–179, 244–245, Asp-253, 259–260, Ala-276, and Lys-280; these read DAK, RF, and RK. L-methionine is bound at residue Asp-253. L-methionine is bound at residue Lys-284.

This sequence belongs to the AdoMet synthase family. As to quaternary structure, homotetramer; dimer of dimers. It depends on Mg(2+) as a cofactor. K(+) serves as cofactor.

Its subcellular location is the cytoplasm. The catalysed reaction is L-methionine + ATP + H2O = S-adenosyl-L-methionine + phosphate + diphosphate. It functions in the pathway amino-acid biosynthesis; S-adenosyl-L-methionine biosynthesis; S-adenosyl-L-methionine from L-methionine: step 1/1. In terms of biological role, catalyzes the formation of S-adenosylmethionine (AdoMet) from methionine and ATP. The overall synthetic reaction is composed of two sequential steps, AdoMet formation and the subsequent tripolyphosphate hydrolysis which occurs prior to release of AdoMet from the enzyme. This chain is S-adenosylmethionine synthase, found in Listeria welshimeri serovar 6b (strain ATCC 35897 / DSM 20650 / CCUG 15529 / CIP 8149 / NCTC 11857 / SLCC 5334 / V8).